A 568-amino-acid chain; its full sequence is Small ribosomal subunit protein bS1 (568 aa).

6 S1 motif domains span residues 39-100, 118-184, 205-273, 290-360, 377-447, and 464-533; these read KTVV…LSRE, GEFV…VSRR, GMVL…LGIK, GKQM…LSIK, GTII…LGIK, and GTIV…LSVK.

This sequence belongs to the bacterial ribosomal protein bS1 family.

Binds mRNA; thus facilitating recognition of the initiation point. It is needed to translate mRNA with a short Shine-Dalgarno (SD) purine-rich sequence. This Rickettsia conorii (strain ATCC VR-613 / Malish 7) protein is Small ribosomal subunit protein bS1 (rpsA).